The sequence spans 296 residues: MLLGSHVSMNGKKMLEGSAEEAHKFGESTFMIYTGAPQNTRRKPIEELNIEKGHEIMKAHGLSNIVVHAPYIINIANTVKPHVFELGVEFLQSEIERTQALGAQDIVLHPGSHVGEGTDAGIKKIIEGLNEVLTNDNNVRIALETMAGKGSEVGRNFEELARIIDGVNHNDRLSVCFDTCHTHDAGYNVKEDFDGVLNEFDKIIGVDRIKVVHVNDSKNDIGAHKDRHENIGFGYIGFDALNYVVHHDTFKDIPKILETPYVGEDKKNKKPPYKLEIEMLKQQKFDEDLKNKILQQ.

Residues histidine 68, histidine 109, glutamate 144, aspartate 178, histidine 181, histidine 213, aspartate 226, histidine 228, and glutamate 258 each coordinate Zn(2+).

Belongs to the AP endonuclease 2 family. Zn(2+) serves as cofactor.

The enzyme catalyses Endonucleolytic cleavage to 5'-phosphooligonucleotide end-products.. Endonuclease IV plays a role in DNA repair. It cleaves phosphodiester bonds at apurinic or apyrimidinic (AP) sites, generating a 3'-hydroxyl group and a 5'-terminal sugar phosphate. The protein is Probable endonuclease 4 of Staphylococcus saprophyticus subsp. saprophyticus (strain ATCC 15305 / DSM 20229 / NCIMB 8711 / NCTC 7292 / S-41).